A 209-amino-acid chain; its full sequence is Uracil phosphoribosyltransferase (209 aa).

Residues Arg79, Arg104, and 131 to 139 (DPMLATGGS) each bind 5-phospho-alpha-D-ribose 1-diphosphate. Uracil-binding positions include Ile194 and 199–201 (GDA). Asp200 is a binding site for 5-phospho-alpha-D-ribose 1-diphosphate.

Belongs to the UPRTase family. Mg(2+) is required as a cofactor.

The enzyme catalyses UMP + diphosphate = 5-phospho-alpha-D-ribose 1-diphosphate + uracil. Its pathway is pyrimidine metabolism; UMP biosynthesis via salvage pathway; UMP from uracil: step 1/1. With respect to regulation, allosterically activated by GTP. Functionally, catalyzes the conversion of uracil and 5-phospho-alpha-D-ribose 1-diphosphate (PRPP) to UMP and diphosphate. This is Uracil phosphoribosyltransferase from Listeria innocua serovar 6a (strain ATCC BAA-680 / CLIP 11262).